The following is a 513-amino-acid chain: Lysine--tRNA ligase (513 aa).

Mg(2+) contacts are provided by E423 and E430.

This sequence belongs to the class-II aminoacyl-tRNA synthetase family. In terms of assembly, homodimer. The cofactor is Mg(2+).

Its subcellular location is the cytoplasm. The enzyme catalyses tRNA(Lys) + L-lysine + ATP = L-lysyl-tRNA(Lys) + AMP + diphosphate. This is Lysine--tRNA ligase from Anaeromyxobacter dehalogenans (strain 2CP-1 / ATCC BAA-258).